The primary structure comprises 138 residues: uncharacterized protein (138 aa).

The region spanning 3–72 (LYSISKAAEK…LEDINEFVKD (70 aa)) is the HTH merR-type domain. Residues 6 to 25 (ISKAAEKTSISSYTLRYYEK) constitute a DNA-binding region (H-T-H motif).

This is an uncharacterized protein from Bacillus subtilis (strain 168).